Reading from the N-terminus, the 777-residue chain is Double zinc ribbon and ankyrin repeat-containing protein 1 (777 aa).

Over residues 161–176 (QVGERTDPKTLKDLRF) the composition is skewed to basic and acidic residues. The disordered stretch occupies residues 161 to 202 (QVGERTDPKTLKDLRFSESPLEIPAHSGGSGSRPPTRQSQSP). Polar residues predominate over residues 193–202 (RPPTRQSQSP). Ser201 is modified (phosphoserine). DZANK-type zinc fingers lie at residues 230 to 289 (CAHC…CVVC) and 358 to 406 (CSRC…GSCG). ANK repeat units lie at residues 442 to 473 (NIPLPRSDAGTKRDIGTQTVGLFYPSGKLLAK) and 477 to 506 (EIASQKQRQEKMSDHKPLLTAISPGRGYWR).

Interacts with NINL. Associates with DYNC1H1 and multiple dynein intermediate and light chains as well as actin-binding proteins.

Its subcellular location is the cytoplasm. The protein resides in the cytoskeleton. It is found in the microtubule organizing center. It localises to the centrosome. The protein localises to the cilium basal body. Its function is as follows. Involved in vesicle transport in photoreceptor cells. This Macaca fascicularis (Crab-eating macaque) protein is Double zinc ribbon and ankyrin repeat-containing protein 1 (DZANK1).